The following is a 141-amino-acid chain: MSNKKVIKLIKLQIPGGKANPAPPIGPALGAAGVNIMGFCKEFNAATQDRPGDLLPVVITVYSDKTFTFITKQPPVSSLIKKALNLESGSKIPNRNKVGKLTQAQVTAIAEQKMKDMDVVLLESAKRMVEGTARSMGIDVE.

It belongs to the universal ribosomal protein uL11 family. Part of the ribosomal stalk of the 50S ribosomal subunit. Interacts with L10 and the large rRNA to form the base of the stalk. L10 forms an elongated spine to which L12 dimers bind in a sequential fashion forming a multimeric L10(L12)X complex. Post-translationally, one or more lysine residues are methylated.

Functionally, forms part of the ribosomal stalk which helps the ribosome interact with GTP-bound translation factors. The protein is Large ribosomal subunit protein uL11 of Chlamydia abortus (strain DSM 27085 / S26/3) (Chlamydophila abortus).